The primary structure comprises 360 residues: Photosystem II protein D1 (360 aa).

3 consecutive transmembrane segments (helical) span residues 29 to 46 (YIGW…TATS), 118 to 133 (HFLL…EWEL), and 142 to 156 (WIFV…AASA). Histidine 118 serves as a coordination point for chlorophyll a. Tyrosine 126 contributes to the pheophytin a binding site. The [CaMn4O5] cluster site is built by aspartate 170 and glutamate 189. A helical membrane pass occupies residues 197–218 (FHMAGVAGVFGGSLFSAMHGSL). Histidine 198 contributes to the chlorophyll a binding site. Residues histidine 215 and 264-265 (SF) contribute to the a quinone site. Residue histidine 215 participates in Fe cation binding. Position 272 (histidine 272) interacts with Fe cation. The helical transmembrane segment at 274-288 (FLALWPVVGIWLTAM) threads the bilayer. Histidine 332, glutamate 333, aspartate 342, and alanine 344 together coordinate [CaMn4O5] cluster. Positions 345-360 (SGEVLPVALTAPAVNG) are excised as a propeptide.

Belongs to the reaction center PufL/M/PsbA/D family. PSII is composed of 1 copy each of membrane proteins PsbA, PsbB, PsbC, PsbD, PsbE, PsbF, PsbH, PsbI, PsbJ, PsbK, PsbL, PsbM, PsbT, PsbX, PsbY, PsbZ, Psb30/Ycf12, at least 3 peripheral proteins of the oxygen-evolving complex and a large number of cofactors. It forms dimeric complexes. The cofactor is The D1/D2 heterodimer binds P680, chlorophylls that are the primary electron donor of PSII, and subsequent electron acceptors. It shares a non-heme iron and each subunit binds pheophytin, quinone, additional chlorophylls, carotenoids and lipids. D1 provides most of the ligands for the Mn4-Ca-O5 cluster of the oxygen-evolving complex (OEC). There is also a Cl(-1) ion associated with D1 and D2, which is required for oxygen evolution. The PSII complex binds additional chlorophylls, carotenoids and specific lipids.. Tyr-161 forms a radical intermediate that is referred to as redox-active TyrZ, YZ or Y-Z. Post-translationally, C-terminally processed by CTPA; processing is essential to allow assembly of the oxygen-evolving complex and thus photosynthetic growth.

Its subcellular location is the plastid. It is found in the chloroplast thylakoid membrane. It catalyses the reaction 2 a plastoquinone + 4 hnu + 2 H2O = 2 a plastoquinol + O2. Functionally, photosystem II (PSII) is a light-driven water:plastoquinone oxidoreductase that uses light energy to abstract electrons from H(2)O, generating O(2) and a proton gradient subsequently used for ATP formation. It consists of a core antenna complex that captures photons, and an electron transfer chain that converts photonic excitation into a charge separation. The D1/D2 (PsbA/PsbD) reaction center heterodimer binds P680, the primary electron donor of PSII as well as several subsequent electron acceptors. The sequence is that of Photosystem II protein D1 from Phaeodactylum tricornutum (strain CCAP 1055/1).